Here is a 491-residue protein sequence, read N- to C-terminus: Peptidoglycan D,D-transpeptidase PbpA (491 aa).

At 1-8 (MNTSLRRV) the chain is on the cytoplasmic side. A helical; Signal-anchor for type II membrane protein transmembrane segment spans residues 9 to 29 (AVAIMVLIVLLLANATVTQVF). Residues 30–491 (AADGLRADPR…TIAAALREGS (462 aa)) lie on the Periplasmic side of the membrane. The transpeptidase stretch occupies residues 160 to 484 (GSVVALEPST…AAPIGRATIA (325 aa)). Ser-222 acts as the Acyl-ester intermediate in catalysis.

Belongs to the transpeptidase family.

Its subcellular location is the cell inner membrane. The catalysed reaction is Preferential cleavage: (Ac)2-L-Lys-D-Ala-|-D-Ala. Also transpeptidation of peptidyl-alanyl moieties that are N-acyl substituents of D-alanine.. It functions in the pathway cell wall biogenesis; peptidoglycan biosynthesis. Its function is as follows. Transpeptidase that catalyzes cross-linking of the peptidoglycan cell wall. Required for the regulation of cell length. The sequence is that of Peptidoglycan D,D-transpeptidase PbpA (pbpA) from Mycolicibacterium smegmatis (strain ATCC 700084 / mc(2)155) (Mycobacterium smegmatis).